The following is a 287-amino-acid chain: Pirin-1 (287 aa).

Thr-2 carries the N-acetylthreonine modification.

Belongs to the pirin family. As to quaternary structure, interacts with the G protein alpha-1 subunit GPA1. Interacts with NFYB6 and NFYB9.

The protein localises to the nucleus. Its function is as follows. Involved in abscisic acid signal transduction. Plays a role in seed germination and early seedling development. Involved in the blue light (BL) signaling. In Arabidopsis thaliana (Mouse-ear cress), this protein is Pirin-1 (PRN1).